Consider the following 66-residue polypeptide: Ranalexin (66 aa).

A signal peptide spans 1–20; that stretch reads MFTLKKSLLLLFFLGTINLS. A propeptide spans 21–44 (small acidic peptide); it reads LCEEERNAEEERRDNPDERDVEVE. Cys60 and Cys66 form a disulfide bridge.

The protein belongs to the frog skin active peptide (FSAP) family. Brevinin subfamily. Expressed by the skin dorsal glands.

It localises to the secreted. Its function is as follows. Potent microbicidal activity, active against S.aureus and E.coli. It also acts as a membrane-disruptive agent at higher concentrations. The polypeptide is Ranalexin (Aquarana catesbeiana (American bullfrog)).